An 856-amino-acid chain; its full sequence is Rod cGMP-specific 3',5'-cyclic phosphodiesterase subunit beta (856 aa).

Residue S2 is modified to N-acetylserine. 2 consecutive GAF domains span residues 71-220 and 252-429; these read NMER…TLNL and DIER…GWSV. The 334-residue stretch at 481–814 folds into the PDEase domain; sequence EEDELGILLK…KEWKALADEY (334 aa). H557 (proton donor) is an active-site residue. Residues H561, H597, D598, and D718 each contribute to the a divalent metal cation site. Over residues 823 to 833 the composition is skewed to basic and acidic residues; it reads EEKQQQEDRTT. The interval 823–842 is disordered; sequence EEKQQQEDRTTAKKAGTEIC. A lipid anchor (S-geranylgeranyl cysteine) is attached at C853. A propeptide spans 854 to 856 (removed in mature form); that stretch reads CIL.

This sequence belongs to the cyclic nucleotide phosphodiesterase family. Oligomer composed of two catalytic chains (alpha and beta), an inhibitory chain (gamma) and the delta chain. A divalent metal cation is required as a cofactor.

It is found in the membrane. It localises to the cell projection. The protein resides in the cilium. The protein localises to the photoreceptor outer segment. It catalyses the reaction 3',5'-cyclic GMP + H2O = GMP + H(+). Rod-specific cGMP phosphodiesterase that catalyzes the hydrolysis of 3',5'-cyclic GMP. Necessary for the formation of a functional phosphodiesterase holoenzyme. Involved in retinal circadian rhythm photoentrainment via modulation of UVA and orange light-induced phase-shift of the retina clock. May participate in processes of transmission and amplification of the visual signal. The protein is Rod cGMP-specific 3',5'-cyclic phosphodiesterase subunit beta of Canis lupus familiaris (Dog).